A 151-amino-acid polypeptide reads, in one-letter code: Transcriptional regulator MraZ (151 aa).

SpoVT-AbrB domains are found at residues 5–52 and 81–124; these read ANAI…PLDE and AVDL…DEDA.

Belongs to the MraZ family. As to quaternary structure, forms oligomers.

It is found in the cytoplasm. The protein resides in the nucleoid. The sequence is that of Transcriptional regulator MraZ from Pseudomonas fluorescens (strain ATCC BAA-477 / NRRL B-23932 / Pf-5).